The primary structure comprises 279 residues: Tryptophan synthase alpha chain (279 aa).

Residues Glu49 and Asp60 each act as proton acceptor in the active site.

Belongs to the TrpA family. As to quaternary structure, tetramer of two alpha and two beta chains.

The catalysed reaction is (1S,2R)-1-C-(indol-3-yl)glycerol 3-phosphate + L-serine = D-glyceraldehyde 3-phosphate + L-tryptophan + H2O. It participates in amino-acid biosynthesis; L-tryptophan biosynthesis; L-tryptophan from chorismate: step 5/5. Functionally, the alpha subunit is responsible for the aldol cleavage of indoleglycerol phosphate to indole and glyceraldehyde 3-phosphate. The chain is Tryptophan synthase alpha chain from Nitrosospira multiformis (strain ATCC 25196 / NCIMB 11849 / C 71).